The primary structure comprises 428 residues: Enolase 1 (428 aa).

Gln-167 lines the (2R)-2-phosphoglycerate pocket. The active-site Proton donor is Glu-209. Mg(2+) is bound by residues Asp-246, Glu-288, and Asp-315. The (2R)-2-phosphoglycerate site is built by Lys-340, Arg-369, Ser-370, and Lys-391. The active-site Proton acceptor is Lys-340.

The protein belongs to the enolase family. Component of the RNA degradosome, a multiprotein complex involved in RNA processing and mRNA degradation. Mg(2+) is required as a cofactor.

Its subcellular location is the cytoplasm. The protein localises to the secreted. It localises to the cell surface. It carries out the reaction (2R)-2-phosphoglycerate = phosphoenolpyruvate + H2O. It functions in the pathway carbohydrate degradation; glycolysis; pyruvate from D-glyceraldehyde 3-phosphate: step 4/5. Functionally, catalyzes the reversible conversion of 2-phosphoglycerate (2-PG) into phosphoenolpyruvate (PEP). It is essential for the degradation of carbohydrates via glycolysis. The chain is Enolase 1 from Pseudomonas syringae pv. tomato (strain ATCC BAA-871 / DC3000).